The following is a 32-amino-acid chain: NGWNENKNFILLGAVTWAILVFIVGSLNSYVI.

The chain crosses the membrane as a helical span at residues 9–31 (FILLGAVTWAILVFIVGSLNSYV).

The protein belongs to the PsbZ family. In terms of assembly, PSII is composed of 1 copy each of membrane proteins PsbA, PsbB, PsbC, PsbD, PsbE, PsbF, PsbH, PsbI, PsbJ, PsbK, PsbL, PsbM, PsbT, PsbY, PsbZ, Psb30/Ycf12, at least 3 peripheral proteins of the oxygen-evolving complex and a large number of cofactors. It forms dimeric complexes.

The protein resides in the plastid. Its subcellular location is the chloroplast thylakoid membrane. May control the interaction of photosystem II (PSII) cores with the light-harvesting antenna, regulates electron flow through the 2 photosystem reaction centers. PSII is a light-driven water plastoquinone oxidoreductase, using light energy to abstract electrons from H(2)O, generating a proton gradient subsequently used for ATP formation. This is Photosystem II reaction center protein Z from Euglena stellata.